The primary structure comprises 152 residues: Cell division protein SepF (152 aa).

It belongs to the SepF family. As to quaternary structure, homodimer. Interacts with FtsZ.

The protein resides in the cytoplasm. Cell division protein that is part of the divisome complex and is recruited early to the Z-ring. Probably stimulates Z-ring formation, perhaps through the cross-linking of FtsZ protofilaments. Its function overlaps with FtsA. This is Cell division protein SepF from Listeria monocytogenes serotype 4b (strain CLIP80459).